The following is a 362-amino-acid chain: Probable non-structural 41.0 kDa protein (362 aa).

Positions 341-362 (MNAAAPSAPTPTELPVFSPPSS) are disordered.

This chain is Probable non-structural 41.0 kDa protein (S6), found in Maize rough dwarf virus (MRDV).